A 455-amino-acid polypeptide reads, in one-letter code: Phosphoglucosamine mutase (455 aa).

The active-site Phosphoserine intermediate is Ser-104. Mg(2+)-binding residues include Ser-104, Asp-253, Asp-255, and Asp-257. A Phosphoserine modification is found at Ser-104.

It belongs to the phosphohexose mutase family. The cofactor is Mg(2+). Activated by phosphorylation.

It catalyses the reaction alpha-D-glucosamine 1-phosphate = D-glucosamine 6-phosphate. In terms of biological role, catalyzes the conversion of glucosamine-6-phosphate to glucosamine-1-phosphate. The protein is Phosphoglucosamine mutase of Psychrobacter arcticus (strain DSM 17307 / VKM B-2377 / 273-4).